A 135-amino-acid chain; its full sequence is ATP synthase epsilon chain, chloroplastic (135 aa).

It belongs to the ATPase epsilon chain family. In terms of assembly, F-type ATPases have 2 components, CF(1) - the catalytic core - and CF(0) - the membrane proton channel. CF(1) has five subunits: alpha(3), beta(3), gamma(1), delta(1), epsilon(1). CF(0) has three main subunits: a, b and c.

It localises to the plastid. Its subcellular location is the chloroplast thylakoid membrane. Produces ATP from ADP in the presence of a proton gradient across the membrane. The polypeptide is ATP synthase epsilon chain, chloroplastic (Stigeoclonium helveticum (Green alga)).